The chain runs to 406 residues: Succinylornithine transaminase (406 aa).

At lysine 252 the chain carries N6-(pyridoxal phosphate)lysine.

This sequence belongs to the class-III pyridoxal-phosphate-dependent aminotransferase family. AstC subfamily. The cofactor is pyridoxal 5'-phosphate.

The catalysed reaction is N(2)-succinyl-L-ornithine + 2-oxoglutarate = N-succinyl-L-glutamate 5-semialdehyde + L-glutamate. It participates in amino-acid degradation; L-arginine degradation via AST pathway; L-glutamate and succinate from L-arginine: step 3/5. Its function is as follows. Catalyzes the transamination of N(2)-succinylornithine and alpha-ketoglutarate into N(2)-succinylglutamate semialdehyde and glutamate. Can also act as an acetylornithine aminotransferase. The chain is Succinylornithine transaminase from Escherichia coli O7:K1 (strain IAI39 / ExPEC).